The chain runs to 958 residues: Protein translocase subunit SecA (958 aa).

Residues glutamine 86, 104–108, and aspartate 494 contribute to the ATP site; that span reads GEGKT. 2 disordered regions span residues 863-883 and 902-937; these read AAAT…AEKT and QPIS…GTGK. Zn(2+) is bound by residues cysteine 941, cysteine 943, cysteine 952, and histidine 953.

The protein belongs to the SecA family. Monomer and homodimer. Part of the essential Sec protein translocation apparatus which comprises SecA, SecYEG and auxiliary proteins SecDF. Other proteins may also be involved. Zn(2+) is required as a cofactor.

The protein resides in the cell membrane. The protein localises to the cytoplasm. The catalysed reaction is ATP + H2O + cellular proteinSide 1 = ADP + phosphate + cellular proteinSide 2.. Part of the Sec protein translocase complex. Interacts with the SecYEG preprotein conducting channel. Has a central role in coupling the hydrolysis of ATP to the transfer of proteins into and across the cell membrane, serving as an ATP-driven molecular motor driving the stepwise translocation of polypeptide chains across the membrane. The protein is Protein translocase subunit SecA of Bifidobacterium adolescentis (strain ATCC 15703 / DSM 20083 / NCTC 11814 / E194a).